Here is a 482-residue protein sequence, read N- to C-terminus: Malvidin galactosylase UGT88C3 (482 aa).

H16 functions as the Proton acceptor in the catalytic mechanism. The active-site Charge relay is D117. UDP is bound by residues S279, W345, A349, H366, N370, S371, and E374.

Belongs to the UDP-glycosyltransferase family. Highly expressed in leaves, sheaths, pistils and embryos, observed in stems, stem nodes and panicles, and present at low levels in roots.

Its subcellular location is the endoplasmic reticulum. It localises to the nucleus. The enzyme catalyses malvidin + UDP-alpha-D-galactose = malvidin 3-O-beta-D-galactoside + UDP + H(+). It functions in the pathway pigment biosynthesis; anthocyanin biosynthesis. In terms of biological role, UDP-glycosyltransferase which uses UDP-galactose and malvidin as substrates to catalyze the biosynthesis of malvidin 3-O-galactoside, an anthocyanin conferring purple pigmentation. This is Malvidin galactosylase UGT88C3 from Oryza sativa subsp. japonica (Rice).